Here is a 554-residue protein sequence, read N- to C-terminus: Eukaryotic translation initiation factor 3 subunit D-2 (554 aa).

Residues 291–305 (QFDLLTVNETALEPP) form an RNA gate region. The disordered stretch occupies residues 530–554 (NAFDSDGNEDEETSEDRPFLKSMAN).

It belongs to the eIF-3 subunit D family. As to quaternary structure, component of the eukaryotic translation initiation factor 3 (eIF-3) complex. The eIF-3 complex interacts with pix.

Its subcellular location is the cytoplasm. Functionally, mRNA cap-binding component of the eukaryotic translation initiation factor 3 (eIF-3) complex, which is involved in protein synthesis of a specialized repertoire of mRNAs and, together with other initiation factors, stimulates binding of mRNA and methionyl-tRNAi to the 40S ribosome. The eIF-3 complex specifically targets and initiates translation of a subset of mRNAs involved in cell proliferation. In the eIF-3 complex, eif3d specifically recognizes and binds the 7-methylguanosine cap of a subset of mRNAs. This chain is Eukaryotic translation initiation factor 3 subunit D-2, found in Drosophila mojavensis (Fruit fly).